The following is a 286-amino-acid chain: Pyridoxal kinase PdxY (286 aa).

Substrate-binding positions include Ser9 and 44–45 (MQ). Positions 111, 147, and 180 each coordinate ATP. Substrate is bound at residue Asp221.

The protein belongs to the pyridoxine kinase family. PdxY subfamily. Homodimer. Requires Mg(2+) as cofactor.

The enzyme catalyses pyridoxal + ATP = pyridoxal 5'-phosphate + ADP + H(+). It participates in cofactor metabolism; pyridoxal 5'-phosphate salvage; pyridoxal 5'-phosphate from pyridoxal: step 1/1. Functionally, pyridoxal kinase involved in the salvage pathway of pyridoxal 5'-phosphate (PLP). Catalyzes the phosphorylation of pyridoxal to PLP. The sequence is that of Pyridoxal kinase PdxY from Burkholderia lata (strain ATCC 17760 / DSM 23089 / LMG 22485 / NCIMB 9086 / R18194 / 383).